We begin with the raw amino-acid sequence, 110 residues long: MFGGKGGMGNLMKQAQMMQDKMAKVQEEIARTEMTGEAGAGLVKVTMTGNHNVRKVEIDPSLMEDDKEMLEDLIAAACNDAARRIEENQKTKMAEVTGGMQLPPGMKMPF.

The protein belongs to the YbaB/EbfC family. In terms of assembly, homodimer.

It localises to the cytoplasm. Its subcellular location is the nucleoid. Binds to DNA and alters its conformation. May be involved in regulation of gene expression, nucleoid organization and DNA protection. In Shewanella frigidimarina (strain NCIMB 400), this protein is Nucleoid-associated protein Sfri_2406.